A 329-amino-acid polypeptide reads, in one-letter code: Ribosomal RNA small subunit methyltransferase C (329 aa).

It belongs to the methyltransferase superfamily. RsmC family. Monomer.

The protein resides in the cytoplasm. The catalysed reaction is guanosine(1207) in 16S rRNA + S-adenosyl-L-methionine = N(2)-methylguanosine(1207) in 16S rRNA + S-adenosyl-L-homocysteine + H(+). In terms of biological role, specifically methylates the guanine in position 1207 of 16S rRNA in the 30S particle. This Haemophilus ducreyi (strain 35000HP / ATCC 700724) protein is Ribosomal RNA small subunit methyltransferase C.